A 294-amino-acid polypeptide reads, in one-letter code: Cytidine deaminase (294 aa).

CMP/dCMP-type deaminase domains are found at residues 48–168 (DDNT…FGPN) and 187–294 (ETTD…YYTF). 89 to 91 (NME) contributes to the substrate binding site. His-102 is a Zn(2+) binding site. Glu-104 functions as the Proton donor in the catalytic mechanism. Residues Cys-129 and Cys-132 each coordinate Zn(2+).

It belongs to the cytidine and deoxycytidylate deaminase family. As to quaternary structure, homodimer. Requires Zn(2+) as cofactor.

It carries out the reaction cytidine + H2O + H(+) = uridine + NH4(+). The catalysed reaction is 2'-deoxycytidine + H2O + H(+) = 2'-deoxyuridine + NH4(+). In terms of biological role, this enzyme scavenges exogenous and endogenous cytidine and 2'-deoxycytidine for UMP synthesis. The chain is Cytidine deaminase from Photorhabdus laumondii subsp. laumondii (strain DSM 15139 / CIP 105565 / TT01) (Photorhabdus luminescens subsp. laumondii).